The primary structure comprises 146 residues: Hemoglobin subunit beta (146 aa).

V1 is subject to N-acetylvaline. Positions 2 to 146 (HLTGEEKSAV…VATALAHKYH (145 aa)) constitute a Globin domain. T12 carries the phosphothreonine modification. The residue at position 44 (S44) is a Phosphoserine. Position 63 (H63) interacts with heme b. At K82 the chain carries N6-acetyllysine. Position 92 (H92) interacts with heme b. Residue C93 is modified to S-nitrosocysteine. The residue at position 144 (K144) is an N6-acetyllysine.

Belongs to the globin family. As to quaternary structure, heterotetramer of two alpha chains and two beta chains. As to expression, red blood cells.

Its function is as follows. Involved in oxygen transport from the lung to the various peripheral tissues. The chain is Hemoglobin subunit beta (HBB) from Tursiops truncatus (Atlantic bottle-nosed dolphin).